The sequence spans 318 residues: MANEMEFEKPILELKSKIADLKEYNETSDVDLTNEIEKLEKRLAKLESSIYSNMTAWDKFQVARHPERPTTLDYISLLFEDFMELHGDRTFGDDAAIVGGIATFKGIPVTVIGHQRGKDTKDNLHRNFGMPHPEGFRKALRLMKQADKFGRPIICFIDTKGAYPGRAAEERGQSEAIARNLYEMSDMKVPIISIVIGEGGSGGALALGVGNQIFMLENAVFSVISPEGAAAILWKDASLAKKAAESMRITAGDLFELGITDGIIPEVKGGAHRDLTAQAEEINKTITKSLHALMAFSEEQLIKQRYEKFKKIGVYETI.

One can recognise a CoA carboxyltransferase C-terminal domain in the interval 38 to 292 (KLEKRLAKLE…NKTITKSLHA (255 aa)).

Belongs to the AccA family. In terms of assembly, acetyl-CoA carboxylase is a heterohexamer composed of biotin carboxyl carrier protein (AccB), biotin carboxylase (AccC) and two subunits each of ACCase subunit alpha (AccA) and ACCase subunit beta (AccD).

The protein resides in the cytoplasm. The enzyme catalyses N(6)-carboxybiotinyl-L-lysyl-[protein] + acetyl-CoA = N(6)-biotinyl-L-lysyl-[protein] + malonyl-CoA. It functions in the pathway lipid metabolism; malonyl-CoA biosynthesis; malonyl-CoA from acetyl-CoA: step 1/1. Component of the acetyl coenzyme A carboxylase (ACC) complex. First, biotin carboxylase catalyzes the carboxylation of biotin on its carrier protein (BCCP) and then the CO(2) group is transferred by the carboxyltransferase to acetyl-CoA to form malonyl-CoA. The polypeptide is Acetyl-coenzyme A carboxylase carboxyl transferase subunit alpha (Listeria monocytogenes serovar 1/2a (strain ATCC BAA-679 / EGD-e)).